The following is a 161-amino-acid chain: Regulator of ribonuclease activity A (161 aa).

It belongs to the RraA family. Homotrimer. Binds to both RNA-binding sites in the C-terminal region of Rne and to RhlB.

The protein localises to the cytoplasm. Functionally, globally modulates RNA abundance by binding to RNase E (Rne) and regulating its endonucleolytic activity. Can modulate Rne action in a substrate-dependent manner by altering the composition of the degradosome. Modulates RNA-binding and helicase activities of the degradosome. This is Regulator of ribonuclease activity A from Sodalis glossinidius (strain morsitans).